The chain runs to 274 residues: MQSLHGNCLIAYARHKYILTMVNGEYRYFNGGDLVFADASQIRVDKCVENFVFVSRDTLSLFLPMLKEEALNLHAHKKVSSLLVHHCSRDIPVFQEVAQLSQNKNLRYAEMLRKRALIFALLSVFLEDEHFIPLLLNVLQPNMRTRVCTVINNNIAHEWTLARIASELLMSPSLLKKKLREEETSYSQLLTECRMQRALQLIVIHGFSIKRVAVSCGYHSVSYFIYVFRNYYGMTPTEYQERSAQRLSNRDSAASIVAQGNFYGTDRSAEGIRL.

The HTH araC/xylS-type domain maps to 145–242 (TRVCTVINNN…GMTPTEYQER (98 aa)). 2 consecutive DNA-binding regions (H-T-H motif) follow at residues 162–183 (ARIASELLMSPSLLKKKLREEE) and 209–232 (IKRVAVSCGYHSVSYFIYVFRNYY).

As to quaternary structure, homodimer.

Positively regulates the expression of about fifteen genes involved in acid resistance such as gadA, gadB and gadC. Depending on the conditions (growth phase and medium), can repress gadW. This is HTH-type transcriptional regulator GadX (gadX) from Escherichia coli (strain K12).